The following is a 761-amino-acid chain: Membrane protein of ER body-like protein (761 aa).

2 disordered regions span residues 1 to 85 (MGSA…GEHT) and 120 to 162 (GSES…RSRE). Positions 22–31 (EVEEDDEQIV) are enriched in acidic residues. Over residues 48–65 (VDSSTITNTSSSSSSSFS) the composition is skewed to low complexity. Residues 74 to 85 (PDFHSNGDGEHT) are compositionally biased toward basic and acidic residues. Residues 136 to 154 (TADLNGEQTQLEPENGSTS) are compositionally biased toward polar residues. The stretch at 186–206 (IEEEVDFEDVEYHDVENMMDK) forms a coiled coil. Disordered stretches follow at residues 338–374 (SSSVLEANPPPRESIVPVVNPSRGNLSPMRKDTTGSA) and 416–448 (QTQQKIDNDDSSTADGNHTSDKGRLSPIQPSHG). The segment covering 416–432 (QTQQKIDNDDSSTADGN) has biased composition (polar residues). 5 helical membrane passes run 549–569 (IVYGGLLEAITSLGVISSAAG), 573–593 (SMLNILVLGLANLLGGLILII), 640–660 (VAILSFIITGILPPVVYYFSF), 670–690 (VASVFGASLFCIVLLAIAKAH), and 702–722 (ILYYGSIAVSVSGISYVVGNF).

Belongs to the CCC1 family.

Its subcellular location is the endoplasmic reticulum membrane. Its function is as follows. Not essential for the accumulation of ER body components, including PYK10. The chain is Membrane protein of ER body-like protein (MEBL) from Arabidopsis thaliana (Mouse-ear cress).